The following is a 360-amino-acid chain: Photosystem II protein D1 (360 aa).

3 helical membrane-spanning segments follow: residues 29 to 46, 118 to 133, and 142 to 156; these read YIGW…TATT, HFLL…EWEL, and WIAV…AATA. A chlorophyll a-binding site is contributed by H118. Y126 provides a ligand contact to pheophytin a. Residues D170 and E189 each contribute to the [CaMn4O5] cluster site. The helical transmembrane segment at 197–218 threads the bilayer; sequence FHMMGVAGVFGGSLFSAMHGSL. H198 is a chlorophyll a binding site. A quinone-binding positions include H215 and 264–265; that span reads SF. H215 serves as a coordination point for Fe cation. H272 provides a ligand contact to Fe cation. A helical membrane pass occupies residues 274 to 288; that stretch reads FLALWPVVGIWFTAL. [CaMn4O5] cluster is bound by residues H332, E333, D342, and A344. Positions 345 to 360 are excised as a propeptide; that stretch reads SGEVMPVALTAPSINA.

This sequence belongs to the reaction center PufL/M/PsbA/D family. As to quaternary structure, PSII is composed of 1 copy each of membrane proteins PsbA, PsbB, PsbC, PsbD, PsbE, PsbF, PsbH, PsbI, PsbJ, PsbK, PsbL, PsbM, PsbT, PsbX, PsbY, PsbZ, Psb30/Ycf12, at least 3 peripheral proteins of the oxygen-evolving complex and a large number of cofactors. It forms dimeric complexes. It depends on The D1/D2 heterodimer binds P680, chlorophylls that are the primary electron donor of PSII, and subsequent electron acceptors. It shares a non-heme iron and each subunit binds pheophytin, quinone, additional chlorophylls, carotenoids and lipids. D1 provides most of the ligands for the Mn4-Ca-O5 cluster of the oxygen-evolving complex (OEC). There is also a Cl(-1) ion associated with D1 and D2, which is required for oxygen evolution. The PSII complex binds additional chlorophylls, carotenoids and specific lipids. as a cofactor. Post-translationally, tyr-161 forms a radical intermediate that is referred to as redox-active TyrZ, YZ or Y-Z. C-terminally processed by CTPA; processing is essential to allow assembly of the oxygen-evolving complex and thus photosynthetic growth.

It localises to the plastid. The protein localises to the cyanelle thylakoid membrane. It carries out the reaction 2 a plastoquinone + 4 hnu + 2 H2O = 2 a plastoquinol + O2. In terms of biological role, photosystem II (PSII) is a light-driven water:plastoquinone oxidoreductase that uses light energy to abstract electrons from H(2)O, generating O(2) and a proton gradient subsequently used for ATP formation. It consists of a core antenna complex that captures photons, and an electron transfer chain that converts photonic excitation into a charge separation. The D1/D2 (PsbA/PsbD) reaction center heterodimer binds P680, the primary electron donor of PSII as well as several subsequent electron acceptors. This Cyanophora paradoxa protein is Photosystem II protein D1.